The primary structure comprises 170 residues: MKPERIPICLQQAVMLRLREKLQQANLRLERNYPEPALHYRQRGTAAGTAWLQSWEIRLNPVLLLENQQAFIDEVVPHELAHLLVWKHFGRVAPHGKEWKWMMESVLGLPARRTHQFAIASVRSRTFPYRCGCQQHQLSVRRHNRVVRGESEYRCLHCGTSLRPGEFQKS.

Residues 19–163 enclose the SprT-like domain; it reads REKLQQANLR…RCLHCGTSLR (145 aa). A Zn(2+)-binding site is contributed by H78. Residue E79 is part of the active site. Position 82 (H82) interacts with Zn(2+).

It belongs to the SprT family. Zn(2+) is required as a cofactor.

The protein resides in the cytoplasm. In Erwinia tasmaniensis (strain DSM 17950 / CFBP 7177 / CIP 109463 / NCPPB 4357 / Et1/99), this protein is Protein SprT.